The following is a 141-amino-acid chain: HTH-type transcriptional repressor NsrR (141 aa).

One can recognise an HTH rrf2-type domain in the interval 2 to 129 (QLTSFTDYGL…DQYTLADMVK (128 aa)). The H-T-H motif DNA-binding region spans 28–51 (ISEVTEVYGVSRNHMVKIINQLSR). Cys91, Cys96, and Cys102 together coordinate [2Fe-2S] cluster.

The cofactor is [2Fe-2S] cluster.

Nitric oxide-sensitive repressor of genes involved in protecting the cell against nitrosative stress. May require iron for activity. The chain is HTH-type transcriptional repressor NsrR from Pectobacterium atrosepticum (strain SCRI 1043 / ATCC BAA-672) (Erwinia carotovora subsp. atroseptica).